Reading from the N-terminus, the 480-residue chain is MTLSFTARWRDELPATYTALLPTPLKNARLIWYNDELAQQLAIPASLFDATNGAGVWGGETLLPGMSPVAQVYSGHQFGVWAGQLGDGRGILLGEQLLADGSTLDWHLKGAGLTPYSRMGDGRAVLRSTIRESLASEAMHYLGIPTTRALSIVTSDTPVQRETQETGAMLMRLAQSHMRFGHFEHFYYRREPEKVQQLADFAIRHYWPQWQDVAEKYALWFEEVAARTGRLIAEWQTVGFAHGVMNTDNMSILGLTIDYGPFGFLDDYDPGFIGNHSDHQGRYRFDNQPSVALWNLQRLAQTLTPFIEIDALNRALDRYQDALLTHYGQRMRQKLGFFTEQKDDNVLLNELFSLMAREGSDYTRTFRMLSHTEQQSASSPLRDTFIDRAAFDAWFDRYRARLRTEAVDDALRQQQMQRVNPAIVLRNWLAQRAIDAAEQGDMAELHRLHEVLRQPFTDRDDDYASRPPEWGKRLEVSCSS.

Positions 86, 88, 89, 109, 121, 122, 172, and 179 each coordinate ATP. The active-site Proton acceptor is the Asp-248. The Mg(2+) site is built by Asn-249 and Asp-258. Asp-258 serves as a coordination point for ATP.

It belongs to the SELO family. Requires Mg(2+) as cofactor. Mn(2+) serves as cofactor.

It carries out the reaction L-seryl-[protein] + ATP = 3-O-(5'-adenylyl)-L-seryl-[protein] + diphosphate. The enzyme catalyses L-threonyl-[protein] + ATP = 3-O-(5'-adenylyl)-L-threonyl-[protein] + diphosphate. The catalysed reaction is L-tyrosyl-[protein] + ATP = O-(5'-adenylyl)-L-tyrosyl-[protein] + diphosphate. It catalyses the reaction L-histidyl-[protein] + UTP = N(tele)-(5'-uridylyl)-L-histidyl-[protein] + diphosphate. It carries out the reaction L-seryl-[protein] + UTP = O-(5'-uridylyl)-L-seryl-[protein] + diphosphate. The enzyme catalyses L-tyrosyl-[protein] + UTP = O-(5'-uridylyl)-L-tyrosyl-[protein] + diphosphate. Functionally, nucleotidyltransferase involved in the post-translational modification of proteins. It can catalyze the addition of adenosine monophosphate (AMP) or uridine monophosphate (UMP) to a protein, resulting in modifications known as AMPylation and UMPylation. This is Protein nucleotidyltransferase YdiU from Salmonella paratyphi A (strain ATCC 9150 / SARB42).